Reading from the N-terminus, the 676-residue chain is Translation initiation factor IF-2, mitochondrial (676 aa).

The 184-residue stretch at 143–326 (KRAPVVTIMG…MDIRAENSPK (184 aa)) folds into the tr-type G domain. A G1 region spans residues 152-159 (GHVDHGKT). A GTP-binding site is contributed by 152 to 159 (GHVDHGKT). Residues 177–181 (GITQH) form a G2 region. GTP contacts are provided by residues 200-203 (DTPG) and 254-257 (TKID). A G3 region spans residues 200–203 (DTPG). A G4 region spans residues 254-257 (TKID). Positions 296 to 298 (SAK) are G5.

It belongs to the TRAFAC class translation factor GTPase superfamily. Classic translation factor GTPase family. IF-2 subfamily.

It localises to the mitochondrion. Functionally, one of the essential components for the initiation of protein synthesis. Protects formylmethionyl-tRNA from spontaneous hydrolysis and promotes its binding to the 30S ribosomal subunits. Also involved in the hydrolysis of GTP during the formation of the 70S ribosomal complex. This is Translation initiation factor IF-2, mitochondrial (IFM1) from Saccharomyces cerevisiae (strain ATCC 204508 / S288c) (Baker's yeast).